A 150-amino-acid chain; its full sequence is Putative antitoxin VapB45 (150 aa).

The interval 124-150 (AQRPVAAGRPRPRPQRPVSDRVSDQRR) is disordered. Residues 141–150 (VSDRVSDQRR) are compositionally biased toward basic and acidic residues.

The protein belongs to the phD/YefM antitoxin family.

Possibly the antitoxin component of a type II toxin-antitoxin (TA) system. Its cognate toxin is VapC45 (Potential). This chain is Putative antitoxin VapB45 (vapB45), found in Mycobacterium tuberculosis (strain CDC 1551 / Oshkosh).